A 281-amino-acid chain; its full sequence is sn-glycerol-3-phosphate transport system permease protein UgpE (281 aa).

Transmembrane regions (helical) follow at residues 16 to 36 (LILGIAVILFPLYVAFVAATL), 85 to 105 (FSITLGKITVSMLSAFAIVWF), 113 to 133 (FFWMIFITLMLPVEVRIFPTV), 142 to 162 (LDSYAGLTLPLMASAIATFLF), 202 to 222 (ALFVITFIYGWNQYLWPLLII), and 247 to 267 (WNSVMAAMLLTLIPPVVIVLV). The ABC transmembrane type-1 domain occupies 77 to 268 (LLNSFVMAFS…IPPVVIVLVM (192 aa)).

The protein belongs to the binding-protein-dependent transport system permease family. UgpAE subfamily. As to quaternary structure, the complex is composed of two ATP-binding proteins (UgpC), two transmembrane proteins (UgpA and UgpE) and a solute-binding protein (UgpB).

Its subcellular location is the cell inner membrane. In terms of biological role, part of the ABC transporter complex UgpBAEC involved in sn-glycerol-3-phosphate (G3P) import. Probably responsible for the translocation of the substrate across the membrane. This chain is sn-glycerol-3-phosphate transport system permease protein UgpE (ugpE), found in Shigella flexneri serotype 5b (strain 8401).